The chain runs to 394 residues: Nuclear hormone receptor family member nhr-18 (394 aa).

Residues 8–83 (SGSCEVCGDK…VGMDTRRFQT (76 aa)) constitute a DNA-binding region (nuclear receptor). 2 consecutive NR C4-type zinc fingers follow at residues 11–31 (CEVC…CRAC) and 48–71 (CPNG…LKKC). In terms of domain architecture, NR LBD spans 134-394 (MLQKPTNHVL…FSHPEMFEAT (261 aa)).

Belongs to the nuclear hormone receptor family.

Its subcellular location is the nucleus. Its function is as follows. Orphan nuclear receptor. The polypeptide is Nuclear hormone receptor family member nhr-18 (nhr-18) (Caenorhabditis elegans).